The primary structure comprises 389 residues: 26S proteasome regulatory subunit 10B (389 aa).

Lys72 carries the post-translational modification N6-acetyllysine. Gly174–Thr181 contributes to the ATP binding site. Lys206 carries the N6-acetyllysine modification. Ser244 is modified (phosphoserine).

It belongs to the AAA ATPase family. In terms of assembly, component of the 19S proteasome regulatory particle complex. The 26S proteasome consists of a 20S core particle (CP) and two 19S regulatory subunits (RP). The regulatory particle is made of a lid composed of 9 subunits, a base containing 6 ATPases including PSMC6 and few additional components. Interacts with PAAF1.

It is found in the cytoplasm. Its subcellular location is the nucleus. Its function is as follows. Component of the 26S proteasome, a multiprotein complex involved in the ATP-dependent degradation of ubiquitinated proteins. This complex plays a key role in the maintenance of protein homeostasis by removing misfolded or damaged proteins, which could impair cellular functions, and by removing proteins whose functions are no longer required. Therefore, the proteasome participates in numerous cellular processes, including cell cycle progression, apoptosis, or DNA damage repair. PSMC6 belongs to the heterohexameric ring of AAA (ATPases associated with diverse cellular activities) proteins that unfolds ubiquitinated target proteins that are concurrently translocated into a proteolytic chamber and degraded into peptides. This chain is 26S proteasome regulatory subunit 10B (PSMC6), found in Homo sapiens (Human).